The chain runs to 158 residues: SsrA-binding protein (158 aa).

The interval 133–158 (QLHDKRETEKKRDWNKEKGRLLRDKH) is disordered.

It belongs to the SmpB family.

It localises to the cytoplasm. Required for rescue of stalled ribosomes mediated by trans-translation. Binds to transfer-messenger RNA (tmRNA), required for stable association of tmRNA with ribosomes. tmRNA and SmpB together mimic tRNA shape, replacing the anticodon stem-loop with SmpB. tmRNA is encoded by the ssrA gene; the 2 termini fold to resemble tRNA(Ala) and it encodes a 'tag peptide', a short internal open reading frame. During trans-translation Ala-aminoacylated tmRNA acts like a tRNA, entering the A-site of stalled ribosomes, displacing the stalled mRNA. The ribosome then switches to translate the ORF on the tmRNA; the nascent peptide is terminated with the 'tag peptide' encoded by the tmRNA and targeted for degradation. The ribosome is freed to recommence translation, which seems to be the essential function of trans-translation. This is SsrA-binding protein from Beijerinckia indica subsp. indica (strain ATCC 9039 / DSM 1715 / NCIMB 8712).